Consider the following 87-residue polypeptide: Small ribosomal subunit protein bS18 (87 aa).

It belongs to the bacterial ribosomal protein bS18 family. Part of the 30S ribosomal subunit. Forms a tight heterodimer with protein bS6.

Its function is as follows. Binds as a heterodimer with protein bS6 to the central domain of the 16S rRNA, where it helps stabilize the platform of the 30S subunit. The chain is Small ribosomal subunit protein bS18 from Mesomycoplasma hyopneumoniae (strain 232) (Mycoplasma hyopneumoniae).